The following is a 212-amino-acid chain: Imidazole glycerol phosphate synthase subunit HisH (212 aa).

The Glutamine amidotransferase type-1 domain occupies 1 to 212 (MLAILDYKAG…YAYCKEASRA (212 aa)). Residue C79 is the Nucleophile of the active site. Catalysis depends on residues H187 and E189.

Heterodimer of HisH and HisF.

It is found in the cytoplasm. It carries out the reaction 5-[(5-phospho-1-deoxy-D-ribulos-1-ylimino)methylamino]-1-(5-phospho-beta-D-ribosyl)imidazole-4-carboxamide + L-glutamine = D-erythro-1-(imidazol-4-yl)glycerol 3-phosphate + 5-amino-1-(5-phospho-beta-D-ribosyl)imidazole-4-carboxamide + L-glutamate + H(+). It catalyses the reaction L-glutamine + H2O = L-glutamate + NH4(+). It functions in the pathway amino-acid biosynthesis; L-histidine biosynthesis; L-histidine from 5-phospho-alpha-D-ribose 1-diphosphate: step 5/9. IGPS catalyzes the conversion of PRFAR and glutamine to IGP, AICAR and glutamate. The HisH subunit catalyzes the hydrolysis of glutamine to glutamate and ammonia as part of the synthesis of IGP and AICAR. The resulting ammonia molecule is channeled to the active site of HisF. The sequence is that of Imidazole glycerol phosphate synthase subunit HisH from Nitratidesulfovibrio vulgaris (strain DSM 19637 / Miyazaki F) (Desulfovibrio vulgaris).